Consider the following 290-residue polypeptide: MHALNLQPKTITLAERLADLAVDALIDEADLSPKPALVDRRGNGAHTDLHLGLMHASALALWPAFKEMAEAALEFGEIGLPLREAIGRIGREGEQAMLATTHGVNTHRGAIWALGLLVTAAALDTKSTSAGAVTLRAARLALLDDRYAPRPLSHGAQVAQRYGARGAREEAQLGFPSVVQRGLPQLKRSRAAGHGEQNARLDALLAIMTDLADTCVLYRAGEQGLHAMQHGARAVLDAGGSASLTGRRRLHELDQQLIALNASPGGAADLLAASLLLDRIERDGILQGAF.

It belongs to the CitG/MdcB family.

It carries out the reaction 3'-dephospho-CoA + ATP = 2'-(5''-triphospho-alpha-D-ribosyl)-3'-dephospho-CoA + adenine. In terms of biological role, involved in the formation of 2-(5''-phosphoribosyl)-3'-dephosphocoenzyme-A, the prosthetic group of the acyl-carrier protein of the malonate decarboxylase. This Pseudomonas fluorescens (strain Pf0-1) protein is Probable 2-(5''-triphosphoribosyl)-3'-dephosphocoenzyme-A synthase.